The primary structure comprises 148 residues: Small ribosomal subunit protein uS9 (148 aa).

Belongs to the universal ribosomal protein uS9 family.

This is Small ribosomal subunit protein uS9 (RpS16) from Drosophila melanogaster (Fruit fly).